The chain runs to 128 residues: MILGLGLDVVEVARIQRILAGPPARAERFLARVFAPAERAYCDARQDRATRYAARFAAKEAAVKALGTPEGVRWLDLVVERGTGAPSLALDGVAADAARRMGVARVHLTLTHDGGVAVAAVILEGAGP.

Residues Asp-8 and Glu-60 each contribute to the Mg(2+) site.

The protein belongs to the P-Pant transferase superfamily. AcpS family. Requires Mg(2+) as cofactor.

It is found in the cytoplasm. The enzyme catalyses apo-[ACP] + CoA = holo-[ACP] + adenosine 3',5'-bisphosphate + H(+). Its function is as follows. Transfers the 4'-phosphopantetheine moiety from coenzyme A to a Ser of acyl-carrier-protein. This Anaeromyxobacter dehalogenans (strain 2CP-C) protein is Holo-[acyl-carrier-protein] synthase.